We begin with the raw amino-acid sequence, 273 residues long: MTVRKNQASLTAEEKRRFVAALLELKRTGRYDAFVTTHNAFILGDTDNGERTGHRSPSFLPWHRRFLLEFERALQSVDASVALPYWDWSADRSTRSSLWAPDFLGGTGRSRDGQVMDGPFAASAGNWPINVRVDGRTFLRRALGAGVSELPTRAEVDSVLAMATYDMAPWNSGSDGFRNHLEGWRGVNLHNRVHVWVGGQMATGVSPNDPVFWLHHAYIDKLWAEWQRRHPSSPYLPGGGTPNVVDLNETMKPWNDTTPAALLDHTRHYTFDV.

The Cu cation site is built by histidine 38, histidine 54, histidine 63, histidine 190, histidine 194, and histidine 216.

This sequence belongs to the tyrosinase family. Requires Cu(2+) as cofactor.

The enzyme catalyses 2 L-dopa + O2 = 2 L-dopaquinone + 2 H2O. It carries out the reaction L-tyrosine + O2 = L-dopaquinone + H2O. In terms of biological role, this is a copper-containing oxidase that functions in the formation of pigments such as melanins and other polyphenolic compounds. This chain is Tyrosinase (melC2), found in Streptomyces antibioticus.